The sequence spans 858 residues: Selenocysteine insertion sequence-binding protein 2 (858 aa).

3 disordered regions span residues 127 to 261, 275 to 296, and 327 to 625; these read KPRH…GDVG, SDHTDGAVTSNATTSSPSCTQE, and LKKT…DSAT. Basic and acidic residues-rich tracts occupy residues 147 to 166, 188 to 197, and 215 to 224; these read KPSDERRACEEQKSSSRRAD, SSLKSDGYHK, and PEFEFSRLDF. Polar residues-rich tracts occupy residues 281 to 296 and 327 to 352; these read AVTSNATTSSPSCTQE and LKKTTSSADAKNVSVTSEALSSNPSY. A Nuclear localization signal motif is present at residues 380–387; that stretch reads KNKKKKEK. Basic residues predominate over residues 418–429; it reads RRHRGQSPKLHS. The span at 430-447 shows a compositional bias: polar residues; sequence KQQTQNEFKTSGKKSQVP. A compositionally biased stretch (basic and acidic residues) spans 539 to 548; the sequence is ILKERQERMQ. Polar residues-rich tracts occupy residues 554–563 and 571–582; these read SAVSLTVASD and GASNQTPSQDNP. The segment at 678–699 is RNA-binding; sequence LVLGLREVLKHLKLRKLKCIII. The tract at residues 785-819 is disordered; that stretch reads MRQEQAGEPGPQSPPSPPMQDPIPSTEEGTLPSTG. A compositionally biased stretch (pro residues) spans 795-805; it reads PQSPPSPPMQD.

The protein localises to the cytoplasm. It is found in the nucleus. Functionally, mRNA-binding protein that binds to the SECIS (selenocysteine insertion sequence) element present in the 3'-UTR of mRNAs encoding selenoproteins and facilitates the incorporation of the rare amino acid selenocysteine. Insertion of selenocysteine at UGA codons is mediated by SECISBP2 and EEFSEC: SECISBP2 (1) specifically binds the SECIS sequence once the 80S ribosome encounters an in-frame UGA codon and (2) contacts the RPS27A/eS31 of the 40S ribosome before ribosome stalling. (3) GTP-bound EEFSEC then delivers selenocysteinyl-tRNA(Sec) to the 80S ribosome and adopts a preaccommodated state conformation. (4) After GTP hydrolysis, EEFSEC dissociates from the assembly, selenocysteinyl-tRNA(Sec) accommodates, and peptide bond synthesis and selenoprotein elongation occur. This chain is Selenocysteine insertion sequence-binding protein 2, found in Mus musculus (Mouse).